A 353-amino-acid chain; its full sequence is MFIKGRAAKTPRGEPRRSSRGGRKLAVVAPPPVLGSTSRPHFRRESIARRRCRKSGRRLAASRKMAATAATVNGSTTVSSSGPAATSVGILQAAAGMYEQLKDEWNRKNPNLSKCGEELGRLKLVLLELNFLPTTGTKLTKQQLILARDILEIGAQWSILCKDIPSFERYMAQLKCYYFDYKEQLPESAYMHQLLGLNLLFLLSQNRVAEFHTELERLPAKDIQTNVYIKHPVSLEQYLMEGSYNKVFLAKGNIPAESYTFFIDILLDTIRDEIAGCIEKAYEKILFAEATRILFFSTPKKMTDYAKKRGWVLGPNNYYSFASQQQKPEDSTIPSTELAKQVIEYARQLEMIV.

A disordered region spans residues 1 to 25 (MFIKGRAAKTPRGEPRRSSRGGRKL). Residues 165 to 334 (PSFERYMAQL…QQKPEDSTIP (170 aa)) enclose the PCI domain. Residue lysine 300 forms a Glycyl lysine isopeptide (Lys-Gly) (interchain with G-Cter in SUMO2) linkage.

Belongs to the proteasome subunit S14 family. As to quaternary structure, component of the 19S proteasome regulatory particle complex. The 26S proteasome consists of a 20S core particle (CP) and two 19S regulatory subunits (RP). The regulatory particle is made of a lid composed of 9 subunits including PSMD8, a base containing 6 ATPases and few additional components. Interacts with DDI2. Interacts with TASOR. Expressed in the Sertoli cells of the testis.

Functionally, component of the 26S proteasome, a multiprotein complex involved in the ATP-dependent degradation of ubiquitinated proteins. This complex plays a key role in the maintenance of protein homeostasis by removing misfolded or damaged proteins, which could impair cellular functions, and by removing proteins whose functions are no longer required. Therefore, the proteasome participates in numerous cellular processes, including cell cycle progression, apoptosis, or DNA damage repair. In Mus musculus (Mouse), this protein is 26S proteasome non-ATPase regulatory subunit 8 (Psmd8).